We begin with the raw amino-acid sequence, 229 residues long: Potassium/proton antiporter CemA (229 aa).

3 helical membrane-spanning segments follow: residues 6-26 (AFIPFFYFTSIVFLPWLISLC), 107-127 (ILHFSTNLISFVILSGYSFWG), and 189-209 (ILSGLVSTFPVILDTIFKYWI).

The protein belongs to the CemA family.

Its subcellular location is the plastid. It localises to the chloroplast inner membrane. It carries out the reaction K(+)(in) + H(+)(out) = K(+)(out) + H(+)(in). Functionally, contributes to K(+)/H(+) antiport activity by supporting proton efflux to control proton extrusion and homeostasis in chloroplasts in a light-dependent manner to modulate photosynthesis. Prevents excessive induction of non-photochemical quenching (NPQ) under continuous-light conditions. Indirectly promotes efficient inorganic carbon uptake into chloroplasts. The chain is Potassium/proton antiporter CemA from Nasturtium officinale (Watercress).